Reading from the N-terminus, the 219-residue chain is Ribose-5-phosphate isomerase A (219 aa).

Residues 28 to 31 (TGST), 81 to 84 (DGAD), and 94 to 97 (KGGG) each bind substrate. Catalysis depends on glutamate 103, which acts as the Proton acceptor. Position 121 (lysine 121) interacts with substrate.

This sequence belongs to the ribose 5-phosphate isomerase family. In terms of assembly, homodimer.

The enzyme catalyses aldehydo-D-ribose 5-phosphate = D-ribulose 5-phosphate. It participates in carbohydrate degradation; pentose phosphate pathway; D-ribose 5-phosphate from D-ribulose 5-phosphate (non-oxidative stage): step 1/1. Its function is as follows. Catalyzes the reversible conversion of ribose-5-phosphate to ribulose 5-phosphate. This is Ribose-5-phosphate isomerase A from Shewanella frigidimarina (strain NCIMB 400).